Reading from the N-terminus, the 268-residue chain is Leucyl/phenylalanyl-tRNA--protein transferase (268 aa).

It belongs to the L/F-transferase family.

The protein resides in the cytoplasm. It carries out the reaction N-terminal L-lysyl-[protein] + L-leucyl-tRNA(Leu) = N-terminal L-leucyl-L-lysyl-[protein] + tRNA(Leu) + H(+). The catalysed reaction is N-terminal L-arginyl-[protein] + L-leucyl-tRNA(Leu) = N-terminal L-leucyl-L-arginyl-[protein] + tRNA(Leu) + H(+). The enzyme catalyses L-phenylalanyl-tRNA(Phe) + an N-terminal L-alpha-aminoacyl-[protein] = an N-terminal L-phenylalanyl-L-alpha-aminoacyl-[protein] + tRNA(Phe). Functionally, functions in the N-end rule pathway of protein degradation where it conjugates Leu, Phe and, less efficiently, Met from aminoacyl-tRNAs to the N-termini of proteins containing an N-terminal arginine or lysine. In Zymomonas mobilis subsp. mobilis (strain ATCC 31821 / ZM4 / CP4), this protein is Leucyl/phenylalanyl-tRNA--protein transferase.